The following is a 646-amino-acid chain: Pentatricopeptide repeat-containing protein At5g48910 (646 aa).

The segment at 1-24 (MNPTQTLFSPGGNSPASSPASHPS) is disordered. Residues 9–24 (SPGGNSPASSPASHPS) are compositionally biased toward low complexity. PPR repeat units lie at residues 54-88 (DTLA…MPQR), 89-126 (NCFS…FVEP), 127-161 (NRFT…GFGG), 162-197 (DEFV…DMVV), 207-237 (EIVL…MRQR), 238-272 (SVVS…DIRP), 273-307 (NYVT…GIRI), 308-338 (DDVL…LPRE), 339-373 (NVIT…GVRP), 374-409 (SDVA…GLEP), and 410-440 (RIEH…MPIK). Positions 445 to 520 (IWKALLGACR…DPGCSLIDID (76 aa)) are type E motif. The segment at 521–551 (GVLHEFVVEDDSHPKAKEINSMLVEISDKLR) is type E(+) motif. The type DYW motif stretch occupies residues 552–646 (LAGYRPITTQ…DGSCSCMDYW (95 aa)).

Belongs to the PPR family. PCMP-H subfamily.

This is Pentatricopeptide repeat-containing protein At5g48910 (PCMP-H38) from Arabidopsis thaliana (Mouse-ear cress).